A 533-amino-acid polypeptide reads, in one-letter code: GMP synthase [glutamine-hydrolyzing] (533 aa).

Residues 25-215 (SIVIFDFGSQ…VFNICKCHAN (191 aa)) enclose the Glutamine amidotransferase type-1 domain. The active-site Nucleophile is cysteine 102. Active-site residues include histidine 189 and glutamate 191. One can recognise a GMPS ATP-PPase domain in the interval 216 to 408 (WTMGNYIQES…LGLPDEMIWR (193 aa)). 243–249 (SGGVDSA) lines the ATP pocket.

As to quaternary structure, homodimer.

The enzyme catalyses XMP + L-glutamine + ATP + H2O = GMP + L-glutamate + AMP + diphosphate + 2 H(+). The protein operates within purine metabolism; GMP biosynthesis; GMP from XMP (L-Gln route): step 1/1. Its function is as follows. Catalyzes the synthesis of GMP from XMP. This chain is GMP synthase [glutamine-hydrolyzing], found in Dehalococcoides mccartyi (strain CBDB1).